The following is a 145-amino-acid chain: Transcriptional regulator MraZ (145 aa).

2 SpoVT-AbrB domains span residues 5–50 and 81–124; these read TFNH…ALPQ and AHEV…DKAA.

The protein belongs to the MraZ family. In terms of assembly, forms oligomers.

It is found in the cytoplasm. It localises to the nucleoid. The polypeptide is Transcriptional regulator MraZ (Anaeromyxobacter sp. (strain Fw109-5)).